The following is a 533-amino-acid chain: Probable fucosyltransferase 5 (533 aa).

Residues 1–13 (MYQKFQISGKIVK) lie on the Cytoplasmic side of the membrane. Residues 14–34 (TLGLKMKVLIAVSFGSLLFIL) traverse the membrane as a helical; Signal-anchor for type II membrane protein segment. The Lumenal segment spans residues 35–533 (SYSNNFNNKL…YGGLKLYDEF (499 aa)). N-linked (GlcNAc...) asparagine glycans are attached at residues Asn202, Asn227, Asn374, Asn396, and Asn475.

The protein belongs to the glycosyltransferase 37 family. In terms of tissue distribution, expressed in roots, leaves, flowers and siliques.

Its subcellular location is the golgi apparatus. The protein resides in the golgi stack membrane. The protein operates within protein modification; protein glycosylation. Its function is as follows. May be involved in cell wall biosynthesis. May act as a fucosyltransferase. This Arabidopsis thaliana (Mouse-ear cress) protein is Probable fucosyltransferase 5 (FUT5).